The chain runs to 668 residues: DNA ligase (668 aa).

NAD(+)-binding positions include 32–36, 81–82, and Glu110; these read DSEYD and SL. Lys112 serves as the catalytic N6-AMP-lysine intermediate. Positions 133, 167, 283, and 307 each coordinate NAD(+). Residues Cys401, Cys404, Cys419, and Cys424 each contribute to the Zn(2+) site. The 83-residue stretch at 586–668 folds into the BRCT domain; the sequence is QTDSEFNGKT…IQKQKEVENK (83 aa).

Belongs to the NAD-dependent DNA ligase family. LigA subfamily. Mg(2+) serves as cofactor. It depends on Mn(2+) as a cofactor.

It carries out the reaction NAD(+) + (deoxyribonucleotide)n-3'-hydroxyl + 5'-phospho-(deoxyribonucleotide)m = (deoxyribonucleotide)n+m + AMP + beta-nicotinamide D-nucleotide.. Its function is as follows. DNA ligase that catalyzes the formation of phosphodiester linkages between 5'-phosphoryl and 3'-hydroxyl groups in double-stranded DNA using NAD as a coenzyme and as the energy source for the reaction. It is essential for DNA replication and repair of damaged DNA. The sequence is that of DNA ligase from Staphylococcus carnosus (strain TM300).